A 267-amino-acid polypeptide reads, in one-letter code: Tryptophan synthase alpha chain (267 aa).

Active-site proton acceptor residues include glutamate 49 and aspartate 60.

This sequence belongs to the TrpA family. As to quaternary structure, tetramer of two alpha and two beta chains.

The enzyme catalyses (1S,2R)-1-C-(indol-3-yl)glycerol 3-phosphate + L-serine = D-glyceraldehyde 3-phosphate + L-tryptophan + H2O. The protein operates within amino-acid biosynthesis; L-tryptophan biosynthesis; L-tryptophan from chorismate: step 5/5. In terms of biological role, the alpha subunit is responsible for the aldol cleavage of indoleglycerol phosphate to indole and glyceraldehyde 3-phosphate. The sequence is that of Tryptophan synthase alpha chain from Acinetobacter baylyi (strain ATCC 33305 / BD413 / ADP1).